Reading from the N-terminus, the 173-residue chain is Zinc resistance-associated protein homolog (173 aa).

Positions 1 to 28 (MNSKRIALGIIALATVVSLGTAANNAFA) are cleaved as a signal peptide.

The protein belongs to the ZraP family.

In Nitratidesulfovibrio vulgaris (strain ATCC 29579 / DSM 644 / CCUG 34227 / NCIMB 8303 / VKM B-1760 / Hildenborough) (Desulfovibrio vulgaris), this protein is Zinc resistance-associated protein homolog.